A 657-amino-acid polypeptide reads, in one-letter code: MLKSGRLNFLKLNINSRLLYSTNPQLTKKVIGIDLGTTNSAVAYIRDSNDKKSATIIENDEGQRTTPSIVAFDVKSSPQNKDQMKTLVGMAAKRQNAINSENTFFATKRLIGRAFNDKEVQRDMAVMPYKIVKCESNGQAYLSTSNGLIQSPSQIASILLKYLKQTSEEYLGEKVNLAVITVPAYFNDSQRQATKDAGKLAGLNVLRVINEPTAAALSFGIDDKRNNGLIAVYDLGGGTFDISILDIEDGVFEVRATNGDTHLGGEDFDNVIVNYIIDTFIHENPEITREEITKNRETMQRLKDVSERAKIDLSHVKKTFIELPFVYKSKHLRVPMTEEELDNMTLSLINRTIPPVKQALKDADIEPEDIDEVILVGGMTRMPKIRSVVKDLFGKSPNSSVNPDETVALGAAIQGGILSGEIKNVLLLDVTPLTLGIETFGGAFSPLIPRNTTVPVKKTEIFSTGVDGQAGVDIKVFQGERGLVRNNKLIGDLKLTGITPLPKGIPQIYVTFDIDADGIINVSAAEKSSGKQQSITVIPNSGLSEEEIAKLIEEANANRAQDNLIRQRLELISKADIMISDTENLFKRYEKLISSEKEYSNIVEDIKALRQAIKNFKANENDMSIDVNGIKKATDALQGRALKLFQSATKNQQNQGK.

The protein belongs to the heat shock protein 70 family. In terms of assembly, interacts with the Fe/S cluster assembly proteins ISU1, MGE1, GRX5 and JAC1.

It is found in the mitochondrion matrix. The catalysed reaction is ATP + H2O = ADP + phosphate + H(+). Required for the assembly of iron-sulfur (Fe/S) clusters in mitochondria. Assisted by the DnaJ-like co-chaperone JAC1 and the nucleotide exchange factor MGE1, it mediates ATP-dependent Fe-S cluster transfer from the scaffold proteins ISU1/ISU2 to GRX5. This Saccharomyces cerevisiae (strain ATCC 204508 / S288c) (Baker's yeast) protein is Iron-sulfur cluster biogenesis chaperone, mitochondrial.